A 418-amino-acid polypeptide reads, in one-letter code: Phospho-N-acetylmuramoyl-pentapeptide-transferase (418 aa).

10 helical membrane-spanning segments follow: residues 22–42 (YISF…VLIG), 72–92 (TPTM…LLLA), 95–115 (SNIY…LGLI), 135–155 (IIAQ…SPNI), 208–228 (AATW…VSNG), 244–264 (AIIG…GFAA), 277–297 (LTVF…HNAF), 302–322 (FMGD…AIII), 326–346 (LLLP…MIQV), and 395–415 (KIVV…VVTL).

Belongs to the glycosyltransferase 4 family. MraY subfamily. Mg(2+) is required as a cofactor.

The protein localises to the cell inner membrane. It catalyses the reaction UDP-N-acetyl-alpha-D-muramoyl-L-alanyl-gamma-D-glutamyl-meso-2,6-diaminopimeloyl-D-alanyl-D-alanine + di-trans,octa-cis-undecaprenyl phosphate = di-trans,octa-cis-undecaprenyl diphospho-N-acetyl-alpha-D-muramoyl-L-alanyl-D-glutamyl-meso-2,6-diaminopimeloyl-D-alanyl-D-alanine + UMP. Its pathway is cell wall biogenesis; peptidoglycan biosynthesis. In terms of biological role, catalyzes the initial step of the lipid cycle reactions in the biosynthesis of the cell wall peptidoglycan: transfers peptidoglycan precursor phospho-MurNAc-pentapeptide from UDP-MurNAc-pentapeptide onto the lipid carrier undecaprenyl phosphate, yielding undecaprenyl-pyrophosphoryl-MurNAc-pentapeptide, known as lipid I. This Azobacteroides pseudotrichonymphae genomovar. CFP2 protein is Phospho-N-acetylmuramoyl-pentapeptide-transferase.